Consider the following 787-residue polypeptide: Endonuclease MutS2 (787 aa).

Position 329-336 (329-336) interacts with ATP; it reads GPNTGGKT. Positions 712–787 constitute a Smr domain; it reads INLLGCTVDE…DAGVTIVDFK (76 aa).

The protein belongs to the DNA mismatch repair MutS family. MutS2 subfamily. As to quaternary structure, homodimer. Binds to stalled ribosomes, contacting rRNA.

Endonuclease that is involved in the suppression of homologous recombination and thus may have a key role in the control of bacterial genetic diversity. Its function is as follows. Acts as a ribosome collision sensor, splitting the ribosome into its 2 subunits. Detects stalled/collided 70S ribosomes which it binds and splits by an ATP-hydrolysis driven conformational change. Acts upstream of the ribosome quality control system (RQC), a ribosome-associated complex that mediates the extraction of incompletely synthesized nascent chains from stalled ribosomes and their subsequent degradation. Probably generates substrates for RQC. The protein is Endonuclease MutS2 of Lachnospira eligens (strain ATCC 27750 / DSM 3376 / VPI C15-48 / C15-B4) (Eubacterium eligens).